Reading from the N-terminus, the 262-residue chain is Phosphomannomutase 1 (262 aa).

N-acetylalanine is present on Ala-2. Catalysis depends on Asp-19, which acts as the Nucleophile. Asp-19 and Asp-21 together coordinate Mg(2+). Catalysis depends on Asp-21, which acts as the Proton donor/acceptor. Alpha-D-mannose 1-phosphate-binding residues include Arg-28, Arg-132, Arg-143, Arg-150, Met-186, Ser-188, and Asp-190. The Mg(2+) site is built by Asn-218, Phe-230, Asp-232, and Thr-235. Ser-242 carries the phosphoserine modification.

Belongs to the eukaryotic PMM family. As to quaternary structure, homodimer. Mg(2+) serves as cofactor. In terms of tissue distribution, strong expression in liver, heart, brain, and pancreas; lower expression in skeletal muscle.

It is found in the cytoplasm. It carries out the reaction alpha-D-mannose 1-phosphate = D-mannose 6-phosphate. The protein operates within nucleotide-sugar biosynthesis; GDP-alpha-D-mannose biosynthesis; alpha-D-mannose 1-phosphate from D-fructose 6-phosphate: step 2/2. With respect to regulation, IMP, a metabolite whose concentration is elevated in anoxia, inhibits phosphomannomutase and phosphoglucomutase activities and strongly enhances glucose-1,6-bisphosphatase activity. Functionally, involved in the synthesis of the GDP-mannose and dolichol-phosphate-mannose required for a number of critical mannosyl transfer reactions. In addition, may be responsible for the degradation of glucose-1,6-bisphosphate in ischemic brain. This Homo sapiens (Human) protein is Phosphomannomutase 1 (PMM1).